The sequence spans 1192 residues: Probable phospholipid-transporting ATPase IM (1192 aa).

The Cytoplasmic portion of the chain corresponds to 1–44 (MFCSEKKLREVERIVKANDREYNEKFQYADNRIHTSKYNILTFL). A helical transmembrane segment spans residues 45-66 (PINLFEQFQRVANAYFLCLLIL). The Exoplasmic loop portion of the chain corresponds to 67–72 (QLIPEI). The helical transmembrane segment at 73-92 (SSLTWFTTIVPLVLVITMTA) threads the bilayer. Topologically, residues 93 to 276 (VKDATDDYFR…TSIDRLMNTL (184 aa)) are cytoplasmic. The chain crosses the membrane as a helical span at residues 277 to 298 (VLWIFGFLICLGIILAIGNSIW). The Exoplasmic loop portion of the chain corresponds to 299–327 (ESQTGDQFRTFLFWNEGEKSSVFSGFLTF). A helical membrane pass occupies residues 328-349 (WSYIIILNTVVPISLYVSVEVI). Residues 350-871 (RLGHSYFINW…GRWSYFRMCK (522 aa)) are Cytoplasmic-facing. Catalysis depends on Asp-392, which acts as the 4-aspartylphosphate intermediate. Residues Asp-392, Lys-393, Thr-394, Glu-496, Phe-537, Lys-560, Arg-594, Thr-674, Gly-675, Asp-676, Arg-789, and Lys-795 each contribute to the ATP site. Asp-392 serves as a coordination point for Mg(2+). Thr-394 serves as a coordination point for Mg(2+). Residue Asp-815 coordinates Mg(2+). Positions 818 and 819 each coordinate ATP. Asp-819 is a binding site for Mg(2+). The helical transmembrane segment at 872–892 (FLCYFFYKNFAFTLVHFWFGF) threads the bilayer. Residues 893–904 (FCGFSAQTVYDQ) are Exoplasmic loop-facing. The chain crosses the membrane as a helical span at residues 905-924 (WFITLFNIVYTSLPVLAMGI). Topologically, residues 925-954 (FDQDVSDQNSVDCPQLYKPGQLNLLFNKRK) are cytoplasmic. Residues 955–976 (FFICVLHGIYTSLVLFFIPYGA) traverse the membrane as a helical segment. The Exoplasmic loop portion of the chain corresponds to 977 to 990 (FYNVAGEDGQHIAD). Residues 991–1013 (YQSFAVTMATSLVIVVSVQIALD) traverse the membrane as a helical segment. The Cytoplasmic segment spans residues 1014 to 1019 (TSYWTF). A helical membrane pass occupies residues 1020-1040 (INHVFIWGSIAIYFSILFTMH). Residues 1041 to 1060 (SNGIFGIFPNQFPFVGNARH) lie on the Exoplasmic loop side of the membrane. Residues 1061–1085 (SLTQKCIWLVILLTTVASVMPVVAF) traverse the membrane as a helical segment. The Cytoplasmic portion of the chain corresponds to 1086 to 1192 (RFLKVDLYPT…SFSQDKTVKL (107 aa)). Over residues 1104–1125 (QKAQKKARPPSSRRPRTRRSSS) the composition is skewed to basic residues. Disordered regions lie at residues 1104–1130 (QKAQKKARPPSSRRPRTRRSSSRRSGY) and 1143–1163 (TSGKNMRAKNPPPTSGLEKTH).

The protein belongs to the cation transport ATPase (P-type) (TC 3.A.3) family. Type IV subfamily. Component of a P4-ATPase flippase complex which consists of a catalytic alpha subunit and an accessory beta subunit. Interacts with beta subunits TMEM30A and TMEM30B. Requires Mg(2+) as cofactor. In terms of tissue distribution, ubiquitously expressed at moderate levels.

The protein localises to the cell membrane. It localises to the golgi apparatus. The enzyme catalyses ATP + H2O + phospholipidSide 1 = ADP + phosphate + phospholipidSide 2.. Component of a P4-ATPase flippase complex which catalyzes the hydrolysis of ATP coupled to the transport of aminophospholipids from the outer to the inner leaflet of various membranes and ensures the maintenance of asymmetric distribution of phospholipids. Phospholipid translocation also seems to be implicated in vesicle formation and in uptake of lipid signaling molecules. The sequence is that of Probable phospholipid-transporting ATPase IM (ATP8B4) from Homo sapiens (Human).